Here is a 51-residue protein sequence, read N- to C-terminus: Large ribosomal subunit protein eL39 (51 aa).

The protein belongs to the eukaryotic ribosomal protein eL39 family.

This Drosophila melanogaster (Fruit fly) protein is Large ribosomal subunit protein eL39 (RpL39).